The chain runs to 317 residues: Malate dehydrogenase (317 aa).

Residues 7 to 13 and aspartate 34 contribute to the NAD(+) site; that span reads GAAGGIG. Substrate contacts are provided by arginine 81 and arginine 87. NAD(+) contacts are provided by residues asparagine 94 and 117–119; that span reads VTN. 2 residues coordinate substrate: asparagine 119 and arginine 153. Histidine 177 functions as the Proton acceptor in the catalytic mechanism. Methionine 231 serves as a coordination point for NAD(+).

This sequence belongs to the LDH/MDH superfamily. MDH type 1 family. As to quaternary structure, homodimer.

It carries out the reaction (S)-malate + NAD(+) = oxaloacetate + NADH + H(+). Its function is as follows. Catalyzes the reversible oxidation of malate to oxaloacetate. The protein is Malate dehydrogenase of Actinobacillus pleuropneumoniae serotype 5b (strain L20).